Here is a 44-residue protein sequence, read N- to C-terminus: Cytochrome b559 subunit beta (44 aa).

The helical transmembrane segment at 19–35 threads the bilayer; it reads WVSIHALAVPTIFFLGS. His23 is a binding site for heme.

It belongs to the PsbE/PsbF family. In terms of assembly, heterodimer of an alpha subunit and a beta subunit. PSII is composed of 1 copy each of membrane proteins PsbA, PsbB, PsbC, PsbD, PsbE, PsbF, PsbH, PsbI, PsbJ, PsbK, PsbL, PsbM, PsbT, PsbX, PsbY, PsbZ, Psb30/Ycf12, at least 3 peripheral proteins of the oxygen-evolving complex and a large number of cofactors. It forms dimeric complexes. Heme b is required as a cofactor.

Its subcellular location is the plastid. The protein resides in the chloroplast thylakoid membrane. Its function is as follows. This b-type cytochrome is tightly associated with the reaction center of photosystem II (PSII). PSII is a light-driven water:plastoquinone oxidoreductase that uses light energy to abstract electrons from H(2)O, generating O(2) and a proton gradient subsequently used for ATP formation. It consists of a core antenna complex that captures photons, and an electron transfer chain that converts photonic excitation into a charge separation. This chain is Cytochrome b559 subunit beta, found in Chlamydomonas moewusii (Chlamydomonas eugametos).